The chain runs to 336 residues: Syntaxin-31 (336 aa).

At 1–314 the chain is on the cytoplasmic side; the sequence is MGSTFRDRTV…QHLTRISSNR (314 aa). Disordered stretches follow at residues 23-53 and 152-218; these read GAIP…KASR and RSEN…SQLR. The span at 154–163 shows a compositional bias: basic and acidic residues; the sequence is ENMKAHENRK. Over residues 164 to 181 the composition is skewed to polar residues; that stretch reads QLFSTKNAVDSPPQNNAK. Over residues 190-202 the composition is skewed to low complexity; it reads SSSSNPFGNLQQP. The t-SNARE coiled-coil homology domain occupies 244–306; that stretch reads ENYSQSRAVA…EGARSALLQH (63 aa). A helical; Anchor for type IV membrane protein transmembrane segment spans residues 315 to 335; it reads WLMMKIFAVIILFLIVFLFFV. A336 is a topological domain (vesicular).

The protein belongs to the syntaxin family. Part of the t-SNARE complex. Interacts with CDC48A, but not with VPS45.

Its subcellular location is the golgi apparatus. It is found in the cis-Golgi network membrane. The protein resides in the cytoplasm. The protein localises to the endosome. Vesicle trafficking protein that functions in the secretory pathway. This Arabidopsis thaliana (Mouse-ear cress) protein is Syntaxin-31 (SYP31).